We begin with the raw amino-acid sequence, 253 residues long: ATP synthase subunit a (253 aa).

A run of 6 helical transmembrane segments spans residues 34–54, 89–109, 118–138, 156–178, 203–223, and 226–246; these read SSLFLIIAVFLLLFWTSLSFY, YFPFIFTLHLLLLYCNLIGMI, HIVFTFGLALSIFIGINLIGI, LAIVPLLITIEFLSYIVKVFTLS, LSAGGLLAIFHLIPLALLLAL, and LELAIAGLQAYVFTLLTCIYL.

It belongs to the ATPase A chain family. In terms of assembly, F-type ATPases have 2 components, CF(1) - the catalytic core - and CF(0) - the membrane proton channel. CF(1) has five subunits: alpha(3), beta(3), gamma(1), delta(1), epsilon(1). CF(0) has three main subunits: a, b and c.

It localises to the mitochondrion inner membrane. Mitochondrial membrane ATP synthase (F(1)F(0) ATP synthase or Complex V) produces ATP from ADP in the presence of a proton gradient across the membrane which is generated by electron transport complexes of the respiratory chain. F-type ATPases consist of two structural domains, F(1) - containing the extramembraneous catalytic core and F(0) - containing the membrane proton channel, linked together by a central stalk and a peripheral stalk. During catalysis, ATP synthesis in the catalytic domain of F(1) is coupled via a rotary mechanism of the central stalk subunits to proton translocation. Key component of the proton channel; it may play a direct role in the translocation of protons across the membrane. This Chondrus crispus (Carrageen Irish moss) protein is ATP synthase subunit a (ATP6).